The chain runs to 168 residues: Disulfide bond formation protein B (168 aa).

The Cytoplasmic segment spans residues 1 to 11 (MSNPMRPVRSI). A helical transmembrane segment spans residues 12 to 28 (LLAIFTGCAGLIGYALY). At 29–46 (LQLVENLLPCPLCVVQRM) the chain is on the periplasmic side. Cys-38 and Cys-41 are disulfide-bonded. The chain crosses the membrane as a helical span at residues 47–63 (AYWLIGLTALAGFFHTP). Topologically, residues 64 to 69 (ETTGRR) are cytoplasmic. The helical transmembrane segment at 70–87 (IYAGLMAVFAFTGGLVAL) threads the bilayer. The Periplasmic segment spans residues 88-143 (RQAWLVRYPEAFECGISPEEAFLNALPLARWWPVMFEANGDCADVTWKFASLTLPD). Cys-101 and Cys-129 are disulfide-bonded. The helical transmembrane segment at 144-162 (WSAIFFMILAALSIYVLLV) threads the bilayer. The Cytoplasmic portion of the chain corresponds to 163–168 (RENQRE).

The protein belongs to the DsbB family.

It is found in the cell inner membrane. In terms of biological role, required for disulfide bond formation in some periplasmic proteins. Acts by oxidizing the DsbA protein. The polypeptide is Disulfide bond formation protein B (Nitrosospira multiformis (strain ATCC 25196 / NCIMB 11849 / C 71)).